Reading from the N-terminus, the 588-residue chain is DNA ligase (588 aa).

Glu250 provides a ligand contact to ATP. Lys252 functions as the N6-AMP-lysine intermediate in the catalytic mechanism. ATP is bound by residues Arg257, Arg272, Glu302, Phe342, Arg417, and Lys423.

The protein belongs to the ATP-dependent DNA ligase family. Requires Mg(2+) as cofactor.

The enzyme catalyses ATP + (deoxyribonucleotide)n-3'-hydroxyl + 5'-phospho-(deoxyribonucleotide)m = (deoxyribonucleotide)n+m + AMP + diphosphate.. In terms of biological role, DNA ligase that seals nicks in double-stranded DNA during DNA replication, DNA recombination and DNA repair. The protein is DNA ligase of Nitrosopumilus maritimus (strain SCM1).